The following is a 241-amino-acid chain: Probable phosphatase Cthe_0111 (241 aa).

9 residues coordinate Zn(2+): histidine 8, histidine 10, histidine 16, histidine 41, glutamate 74, histidine 102, histidine 132, aspartate 192, and histidine 194.

It belongs to the PHP family. Zn(2+) is required as a cofactor.

In Acetivibrio thermocellus (strain ATCC 27405 / DSM 1237 / JCM 9322 / NBRC 103400 / NCIMB 10682 / NRRL B-4536 / VPI 7372) (Clostridium thermocellum), this protein is Probable phosphatase Cthe_0111.